Consider the following 310-residue polypeptide: Ribosomal protein uL3 glutamine methyltransferase (310 aa).

The protein belongs to the protein N5-glutamine methyltransferase family. PrmB subfamily.

The catalysed reaction is L-glutaminyl-[ribosomal protein uL3] + S-adenosyl-L-methionine = N(5)-methyl-L-glutaminyl-[ribosomal protein uL3] + S-adenosyl-L-homocysteine + H(+). Functionally, methylates large ribosomal subunit protein uL3 on a specific glutamine residue. The sequence is that of Ribosomal protein uL3 glutamine methyltransferase from Aliivibrio fischeri (strain ATCC 700601 / ES114) (Vibrio fischeri).